The primary structure comprises 341 residues: MRISPEEEVKIIKEILTAMNVPEESSDIVADVTLDADLKGFSSHGIGRFPQYVDGLRHGTIRADGDITIERETESTALINGNHIFGHVVAYRAMELAIEKARNTGVGLVGVHDSNHFGVAGYYSDMAVMNDMIGVVIANTEPAVAPIGGRKPILGTNPVAIGIPSNRYYVSVDMATSASARGKLLEAARKGESIPENVALDAEGKPTTDPEMALKGSILPFGGHKGYALSFMIEILAGPLVGAAFGTAVTGTANPEEMCTKGDLMMAIDPSKMVDPDEFRAQVDEFIEEVKSSGDVLIPGDIESMNIKRRRAEGIELDEKLLERILGIARELDINLEIKEL.

It belongs to the LDH2/MDH2 oxidoreductase family.

It localises to the cytoplasm. The enzyme catalyses a (2S)-2-hydroxycarboxylate + NAD(+) = a 2-oxocarboxylate + NADH + H(+). It functions in the pathway cofactor biosynthesis; coenzyme M biosynthesis; sulfoacetaldehyde from phosphoenolpyruvate and sulfite: step 3/4. It participates in cofactor biosynthesis; 5,6,7,8-tetrahydromethanopterin biosynthesis. Functionally, catalyzes the reduction of sulfopyruvate to (R)-sulfolactate. Involved in the biosynthesis of both coenzyme M (with (R)-sulfolactate) and methanopterin (with alpha-ketoglutarate). The sequence is that of L-sulfolactate dehydrogenase (comC) from Methanothermobacter thermautotrophicus (strain ATCC 29096 / DSM 1053 / JCM 10044 / NBRC 100330 / Delta H) (Methanobacterium thermoautotrophicum).